The following is a 151-amino-acid chain: UPF0735 ACT domain-containing protein SH1278 (151 aa).

The 76-residue stretch at Thr-74 to Met-149 folds into the ACT domain.

Belongs to the UPF0735 family.

The polypeptide is UPF0735 ACT domain-containing protein SH1278 (Staphylococcus haemolyticus (strain JCSC1435)).